We begin with the raw amino-acid sequence, 277 residues long: Large ribosomal subunit protein uL2 (277 aa).

The tract at residues 223–277 (VAMNPVDHPHGGGEGRTSTGRHPVTPWGKRTLGKKTRKRKASDKYIIRSRRARKR) is disordered. Residues 253 to 277 (TLGKKTRKRKASDKYIIRSRRARKR) are compositionally biased toward basic residues.

Belongs to the universal ribosomal protein uL2 family. In terms of assembly, part of the 50S ribosomal subunit. Forms a bridge to the 30S subunit in the 70S ribosome.

One of the primary rRNA binding proteins. Required for association of the 30S and 50S subunits to form the 70S ribosome, for tRNA binding and peptide bond formation. It has been suggested to have peptidyltransferase activity; this is somewhat controversial. Makes several contacts with the 16S rRNA in the 70S ribosome. The protein is Large ribosomal subunit protein uL2 of Halothermothrix orenii (strain H 168 / OCM 544 / DSM 9562).